Here is a 268-residue protein sequence, read N- to C-terminus: MAKMTTIKMKRLLEDRLKNPEYRIVYKRDDDALRIEWRDSGQGMTVSLPNLITKYNNRGDIAIQEMEEHIIEALKIMNETHHLQGMEKHIFPVLRSPSFPIETKAGKKLIYKDHTAETRVFYALDLGKSYRLIDEELLKEEEWTLDRLDEIASFNVRSLSHEVKKDQVADNDFYFLATQDGYDASRILNEAFLEEMKANAQGELTVAVPHQDVLIIADIQNKMGYDILAQMTMKFFAEGRIPITSLSFVYEDRKLEPIFILAKNKPEK.

This sequence belongs to the UPF0354 family.

In Oceanobacillus iheyensis (strain DSM 14371 / CIP 107618 / JCM 11309 / KCTC 3954 / HTE831), this protein is UPF0354 protein OB2234.